The sequence spans 537 residues: O-phosphoserine--tRNA(Cys) ligase (537 aa).

Substrate-binding positions include 186–188 (HMT), 231–233 (SAS), 273–274 (YY), and asparagine 317.

It belongs to the class-II aminoacyl-tRNA synthetase family. O-phosphoseryl-tRNA(Cys) synthetase subfamily. Homotetramer. Interacts with SepCysS.

It carries out the reaction tRNA(Cys) + O-phospho-L-serine + ATP = O-phospho-L-seryl-tRNA(Cys) + AMP + diphosphate. Catalyzes the attachment of O-phosphoserine (Sep) to tRNA(Cys). This chain is O-phosphoserine--tRNA(Cys) ligase, found in Methanococcus maripaludis (strain C6 / ATCC BAA-1332).